Here is a 431-residue protein sequence, read N- to C-terminus: Argininosuccinate lyase (431 aa).

Belongs to the lyase 1 family. Argininosuccinate lyase subfamily.

The protein localises to the cytoplasm. The catalysed reaction is 2-(N(omega)-L-arginino)succinate = fumarate + L-arginine. It participates in amino-acid biosynthesis; L-arginine biosynthesis; L-arginine from L-ornithine and carbamoyl phosphate: step 3/3. The sequence is that of Argininosuccinate lyase from Xanthomonas oryzae pv. oryzae (strain MAFF 311018).